The primary structure comprises 211 residues: Thiamine-phosphate synthase (211 aa).

Residues Gln36–Lys40 and Asn68 each bind 4-amino-2-methyl-5-(diphosphooxymethyl)pyrimidine. Positions 69 and 88 each coordinate Mg(2+). A 4-amino-2-methyl-5-(diphosphooxymethyl)pyrimidine-binding site is contributed by Ser107. Thr133–Ser135 provides a ligand contact to 2-[(2R,5Z)-2-carboxy-4-methylthiazol-5(2H)-ylidene]ethyl phosphate. Residue Lys136 coordinates 4-amino-2-methyl-5-(diphosphooxymethyl)pyrimidine. 2-[(2R,5Z)-2-carboxy-4-methylthiazol-5(2H)-ylidene]ethyl phosphate-binding positions include Gly167 and Ile187–Thr188.

It belongs to the thiamine-phosphate synthase family. Mg(2+) is required as a cofactor.

It catalyses the reaction 2-[(2R,5Z)-2-carboxy-4-methylthiazol-5(2H)-ylidene]ethyl phosphate + 4-amino-2-methyl-5-(diphosphooxymethyl)pyrimidine + 2 H(+) = thiamine phosphate + CO2 + diphosphate. The enzyme catalyses 2-(2-carboxy-4-methylthiazol-5-yl)ethyl phosphate + 4-amino-2-methyl-5-(diphosphooxymethyl)pyrimidine + 2 H(+) = thiamine phosphate + CO2 + diphosphate. It carries out the reaction 4-methyl-5-(2-phosphooxyethyl)-thiazole + 4-amino-2-methyl-5-(diphosphooxymethyl)pyrimidine + H(+) = thiamine phosphate + diphosphate. It functions in the pathway cofactor biosynthesis; thiamine diphosphate biosynthesis; thiamine phosphate from 4-amino-2-methyl-5-diphosphomethylpyrimidine and 4-methyl-5-(2-phosphoethyl)-thiazole: step 1/1. Its function is as follows. Condenses 4-methyl-5-(beta-hydroxyethyl)thiazole monophosphate (THZ-P) and 2-methyl-4-amino-5-hydroxymethyl pyrimidine pyrophosphate (HMP-PP) to form thiamine monophosphate (TMP). The polypeptide is Thiamine-phosphate synthase (Haloarcula marismortui (strain ATCC 43049 / DSM 3752 / JCM 8966 / VKM B-1809) (Halobacterium marismortui)).